We begin with the raw amino-acid sequence, 123 residues long: Small ribosomal subunit protein uS12 (123 aa).

Position 89 is a 3-methylthioaspartic acid (aspartate 89).

Belongs to the universal ribosomal protein uS12 family. Part of the 30S ribosomal subunit. Contacts proteins S8 and S17. May interact with IF1 in the 30S initiation complex.

Functionally, with S4 and S5 plays an important role in translational accuracy. Interacts with and stabilizes bases of the 16S rRNA that are involved in tRNA selection in the A site and with the mRNA backbone. Located at the interface of the 30S and 50S subunits, it traverses the body of the 30S subunit contacting proteins on the other side and probably holding the rRNA structure together. The combined cluster of proteins S8, S12 and S17 appears to hold together the shoulder and platform of the 30S subunit. This is Small ribosomal subunit protein uS12 from Bifidobacterium animalis subsp. lactis (strain AD011).